The sequence spans 58 residues: U7-ctenitoxin-Pr1a (58 aa).

Cystine bridges form between cysteine 2–cysteine 16, cysteine 9–cysteine 22, cysteine 13–cysteine 48, cysteine 15–cysteine 40, cysteine 18–cysteine 55, and cysteine 24–cysteine 38.

As to expression, expressed by the venom gland.

Its subcellular location is the secreted. In terms of biological role, probable neurotoxin. This chain is U7-ctenitoxin-Pr1a, found in Phoneutria reidyi (Brazilian Amazonian armed spider).